We begin with the raw amino-acid sequence, 513 residues long: uncharacterized protein (513 aa).

Disordered regions lie at residues 72–113 and 155–262; these read GVVP…TGQF and IMGG…NPRF. Over residues 82–106 the composition is skewed to low complexity; the sequence is ANRTANPNTNSNPNPNATNAQPNPT. Composition is skewed to polar residues over residues 164–189 and 210–228; these read EANS…QTQG and TPLN…EFQQ. The segment covering 229–238 has biased composition (low complexity); it reads TTSPIFSSSS. The segment covering 239 to 248 has biased composition (pro residues); the sequence is TPPPPPPRPS. The segment covering 253 to 262 has biased composition (polar residues); the sequence is GESQNTNPRF. Residues 396–437 form an RING-type; atypical zinc finger; the sequence is CTICMEMFKINDDVIQLPCKHYFHENCIKPWLRVNGTCAICR. Positions 439 to 513 are disordered; that stretch reads PVDPNSQQRN…DDFVDEEPLE (75 aa). The span at 442-493 shows a compositional bias: polar residues; that stretch reads PNSQQRNNTSTDSANGHNPSNHANPSTSTTNDQGATLRNESFNAASQSNLSS.

This is an uncharacterized protein from Schizosaccharomyces pombe (strain 972 / ATCC 24843) (Fission yeast).